Consider the following 391-residue polypeptide: Phosphoglycerate kinase (391 aa).

Substrate is bound by residues D21–N23, R36, H59–R62, R113, and R146. ATP contacts are provided by residues K197, E319, and G345 to T348.

The protein belongs to the phosphoglycerate kinase family. In terms of assembly, monomer.

The protein localises to the cytoplasm. The enzyme catalyses (2R)-3-phosphoglycerate + ATP = (2R)-3-phospho-glyceroyl phosphate + ADP. It participates in carbohydrate degradation; glycolysis; pyruvate from D-glyceraldehyde 3-phosphate: step 2/5. This chain is Phosphoglycerate kinase, found in Stenotrophomonas maltophilia (strain K279a).